Reading from the N-terminus, the 139-residue chain is Ubiquitin-conjugating enzyme spm2 (139 aa).

One can recognise a UBC core domain in the interval 5-139 (PRNFKLLEEL…PQPPEGSTFF (135 aa)).

Belongs to the ubiquitin-conjugating enzyme family. In terms of assembly, heterodimer with ubc13.

Functionally, has a role in the DNA error-free postreplication repair (PRR) pathway. Lacks catalytic activity by itself. The ubc13/spm2 heterodimer catalyzes the synthesis of non-canonical poly-ubiquitin chains that are linked through 'Lys-63'. The sequence is that of Ubiquitin-conjugating enzyme spm2 (spm2) from Schizosaccharomyces pombe (strain 972 / ATCC 24843) (Fission yeast).